Here is a 305-residue protein sequence, read N- to C-terminus: tRNA uridine(34) hydroxylase (305 aa).

Residues 130–228 (DDPDTLVIDT…YLGEIPEQES (99 aa)) form the Rhodanese domain. The active-site Cysteine persulfide intermediate is the C188.

The protein belongs to the TrhO family.

It carries out the reaction uridine(34) in tRNA + AH2 + O2 = 5-hydroxyuridine(34) in tRNA + A + H2O. In terms of biological role, catalyzes oxygen-dependent 5-hydroxyuridine (ho5U) modification at position 34 in tRNAs. The polypeptide is tRNA uridine(34) hydroxylase (Synechococcus sp. (strain CC9902)).